A 713-amino-acid chain; its full sequence is Polyribonucleotide nucleotidyltransferase (713 aa).

Positions 491 and 497 each coordinate Mg(2+). In terms of domain architecture, KH spans 558–617; that stretch reads PRMITIKINPEKIRDVIGKGGSVIRALTEETGTTIDISDDGVVTIASTSSDGMAEAKKRI. The region spanning 627–695 is the S1 motif domain; the sequence is GQVYEGTVLK…EKGRVRLSAK (69 aa).

The protein belongs to the polyribonucleotide nucleotidyltransferase family. It depends on Mg(2+) as a cofactor.

The protein resides in the cytoplasm. The enzyme catalyses RNA(n+1) + phosphate = RNA(n) + a ribonucleoside 5'-diphosphate. Involved in mRNA degradation. Catalyzes the phosphorolysis of single-stranded polyribonucleotides processively in the 3'- to 5'-direction. This is Polyribonucleotide nucleotidyltransferase from Burkholderia cenocepacia (strain ATCC BAA-245 / DSM 16553 / LMG 16656 / NCTC 13227 / J2315 / CF5610) (Burkholderia cepacia (strain J2315)).